The primary structure comprises 129 residues: Glycine cleavage system H protein (129 aa).

The 83-residue stretch at Ser23–Ser105 folds into the Lipoyl-binding domain. At Lys64 the chain carries N6-lipoyllysine.

Belongs to the GcvH family. In terms of assembly, the glycine cleavage system is composed of four proteins: P, T, L and H. (R)-lipoate serves as cofactor.

Functionally, the glycine cleavage system catalyzes the degradation of glycine. The H protein shuttles the methylamine group of glycine from the P protein to the T protein. The sequence is that of Glycine cleavage system H protein from Herpetosiphon aurantiacus (strain ATCC 23779 / DSM 785 / 114-95).